Here is a 254-residue protein sequence, read N- to C-terminus: Lipid uptake coordinator A (254 aa).

4 helical membrane-spanning segments follow: residues 5–25, 44–64, 85–105, and 114–134; these read VAVL…FYFV, LRIA…FTLL, IMAH…EVWL, and LFGI…GFYL. The segment at 143 to 254 is disordered; sequence PPPKPLKPKK…SGVQVAKVDE (112 aa). The span at 148–163 shows a compositional bias: basic residues; that stretch reads LKPKKPKQRRLRRKKT. Acidic residues predominate over residues 169 to 191; sequence AEPEAAEEAENTELAAQEDEEAV. Positions 192 to 220 are enriched in low complexity; sequence EAPPESIESPGGEPESATREAPAAETATA. Residues 227 to 244 are compositionally biased toward basic residues; sequence LRNRRPTGKTSHRRRRTR.

In terms of assembly, interacts with the Mce1 and Mce4 accessory subunits Rv0199/OmamA, Rv0177/Mam1C and Rv3492c/Mam4B.

The protein resides in the cell membrane. Functionally, required for the import of both fatty acids and cholesterol during growth in macrophages and in axenic culture. Facilitates the uptake of these lipids by stabilizing protein subunits of the Mce1 and Mce4 multi-subunit transporters, which transport fatty acids and cholesterol, respectively. Required for full virulence in vivo. In Mycobacterium tuberculosis (strain ATCC 25618 / H37Rv), this protein is Lipid uptake coordinator A.